Here is a 552-residue protein sequence, read N- to C-terminus: Urocanate hydratase (552 aa).

NAD(+)-binding positions include 49–50 (GG), Q127, 173–175 (GMG), D193, 239–240 (NA), 260–264 (QTSAH), 270–271 (YI), and Y319. Residue C407 is part of the active site. G489 is an NAD(+) binding site.

It belongs to the urocanase family. Requires NAD(+) as cofactor.

It is found in the cytoplasm. The enzyme catalyses 4-imidazolone-5-propanoate = trans-urocanate + H2O. The protein operates within amino-acid degradation; L-histidine degradation into L-glutamate; N-formimidoyl-L-glutamate from L-histidine: step 2/3. Functionally, catalyzes the conversion of urocanate to 4-imidazolone-5-propionate. This chain is Urocanate hydratase, found in Bacillus anthracis (strain CDC 684 / NRRL 3495).